The following is a 315-amino-acid chain: FGFR1 oncogene partner 2 homolog (315 aa).

Coiled coils occupy residues Glu-32–Glu-99 and Val-156–Gln-183. 2 disordered regions span residues Lys-201–Ser-222 and Pro-238–Thr-315. Polar residues predominate over residues Gly-246 to Leu-269.

Belongs to the SIKE family.

The sequence is that of FGFR1 oncogene partner 2 homolog from Drosophila melanogaster (Fruit fly).